The chain runs to 340 residues: N-acetyl-gamma-glutamyl-phosphate reductase (340 aa).

The active site involves C151.

Belongs to the NAGSA dehydrogenase family. Type 1 subfamily.

The protein localises to the cytoplasm. The enzyme catalyses N-acetyl-L-glutamate 5-semialdehyde + phosphate + NADP(+) = N-acetyl-L-glutamyl 5-phosphate + NADPH + H(+). It participates in amino-acid biosynthesis; L-arginine biosynthesis; N(2)-acetyl-L-ornithine from L-glutamate: step 3/4. Catalyzes the NADPH-dependent reduction of N-acetyl-5-glutamyl phosphate to yield N-acetyl-L-glutamate 5-semialdehyde. The chain is N-acetyl-gamma-glutamyl-phosphate reductase from Aquifex aeolicus (strain VF5).